The sequence spans 1046 residues: FERM, ARHGEF and pleckstrin domain-containing protein 1 (1046 aa).

In terms of domain architecture, FERM spans isoleucine 40–glutamate 320. A disordered region spans residues leucine 374–serine 522. Over residues lysine 413–glutamine 424 the composition is skewed to basic and acidic residues. The segment covering arginine 458–leucine 513 has biased composition (polar residues). Residues lysine 541–asparagine 732 enclose the DH domain. The region spanning glutamate 761–aspartate 858 is the PH 1 domain. The tract at residues serine 864 to histidine 907 is disordered. The segment covering threonine 884–leucine 894 has biased composition (acidic residues). A PH 2 domain is found at glutamate 933–serine 1030.

In terms of assembly, interacts with PLXNA4. In terms of tissue distribution, detected in lateral motor column motor neurons and in preganglionic autonomic motor neurons of the column of Terni in the embryonic spinal cord (at protein level).

The protein localises to the cell membrane. The protein resides in the synapse. Its subcellular location is the synaptosome. It localises to the cytoplasm. It is found in the cytosol. The protein localises to the cell projection. The protein resides in the filopodium. Its subcellular location is the dendrite. It localises to the dendritic spine. Its function is as follows. Functions as a guanine nucleotide exchange factor for RAC1. Plays a role in semaphorin signaling via its interaction with PLXNA4. Plays a role in the assembly and disassembly of dendritic filopodia, the formation of dendritic spines, regulation of dendrite length and ultimately the formation of synapses. The protein is FERM, ARHGEF and pleckstrin domain-containing protein 1 (FARP1) of Gallus gallus (Chicken).